The primary structure comprises 471 residues: Phosphatidylserine synthase 2 (471 aa).

A disordered region spans residues 1-26 (MRRGERRVAGGSGSESPLLEGRRSTE). The Cytoplasmic portion of the chain corresponds to 1 to 40 (MRRGERRVAGGSGSESPLLEGRRSTESEVYDDGTNTFFWR). Phosphoserine occurs at positions 12, 14, and 16. Residues 41 to 61 (AHTLTVLFILTCALGYVTLLE) traverse the membrane as a helical segment. Residues 62-74 (ETPQDTAYNTKRG) are Lumenal-facing. A helical transmembrane segment spans residues 75 to 95 (IVASILVFLCFGVTQAKDGPF). The Cytoplasmic portion of the chain corresponds to 96–104 (SRPHPAYWR). The chain crosses the membrane as a helical span at residues 105-125 (FWLCVSVVYELFLIFILFQTV). At 126 to 291 (HDGRQFLKYV…EWKPASSLHR (166 aa)) the chain is on the lumenal side. Asn159 carries an N-linked (GlcNAc...) asparagine glycan. The chain crosses the membrane as a helical span at residues 292 to 312 (WLAVCGIILVFLLAELNTFYL). Residue Lys313 is a topological domain, cytoplasmic. Residues 314–334 (FVLWMPPEHYLVLLRLVFFVN) form a helical membrane-spanning segment. Over 335 to 354 (VGGVAMREIYDFMDELKPHR) the chain is Lumenal. Residues 355 to 375 (KLGQQAWLVAAITVTELLIVV) traverse the membrane as a helical segment. Over 376–381 (KYDPHT) the chain is Cytoplasmic. A helical transmembrane segment spans residues 382–402 (LTLSLPFYISQCWTLGSILVL). Topologically, residues 403 to 471 (TWTVWRFFLR…PAEEGPSAAS (69 aa)) are lumenal. The interval 423 to 471 (RQKQQSHQAINNGDGHPGPEDDLPGTGTAEEEGTTNDGVPAEEGPSAAS) is disordered.

Belongs to the phosphatidyl serine synthase family.

It localises to the endoplasmic reticulum membrane. It catalyses the reaction a 1,2-diacyl-sn-glycero-3-phosphoethanolamine + L-serine = a 1,2-diacyl-sn-glycero-3-phospho-L-serine + ethanolamine. The catalysed reaction is 1-hexadecanoyl-2-(9Z-octadecenoyl)-sn-glycero-3-phosphoethanolamine + L-serine = 1-hexadecanoyl-2-(9Z-octadecenoyl)-sn-glycero-3-phospho-L-serine + ethanolamine. It carries out the reaction 1-hexadecanoyl-2-(4Z,7Z,10Z,13Z,16Z,19Z-docosahexaenoyl)-sn-glycero-3-phosphoethanolamine + L-serine = 1-hexadecanoyl-2-(4Z,7Z,10Z,13Z,16Z,19Z-docosahexaenoyl)-sn-glycero-3-phosphoserine + ethanolamine. The enzyme catalyses 1-octadecanoyl-2-(5Z,8Z,11Z,14Z)-eicosatetraenoyl-sn-glycero-3-phosphoethanolamine + L-serine = 1-octadecanoyl-2-(5Z,8Z,11Z,14Z)-eicosatetraenoyl-sn-glycero-3-phosphoserine + ethanolamine. It catalyses the reaction 1-octadecanoyl-2-(4Z,7Z,10Z,13Z,16Z,19Z-docosahexaenoyl)-sn-glycero-3-phosphoethanolamine + L-serine = 1-octadecanoyl-2-(4Z,7Z,10Z,13Z,16Z,19Z-docosahexaenoyl)-sn-glycero-3-phosphoserine + ethanolamine. The catalysed reaction is 1-(1Z-octadecenyl)-2-(4Z,7Z,10Z,13Z,16Z,19Z-docosahexaenoyl)-sn-glycero-3-phosphoethanolamine + L-serine = 1-(1Z-octadecenyl)-2-(4Z,7Z,10Z,13Z,16Z,19Z-docosahexaenoyl)-sn-glycero-3-phospho-L-serine + ethanolamine. It carries out the reaction 1-octadecanoyl-2-(9Z-octadecenoyl)-sn-glycero-3-phosphoethanolamine + L-serine = 1-octadecanoyl-2-(9Z-octadecenoyl)-sn-glycero-3-phospho-L-serine + ethanolamine. The enzyme catalyses 1-(1Z-octadecenyl)-2-(9Z-octadecenoyl)-sn-glycero-3-phosphoethanolamine + L-serine = 1-(1Z-octadecenyl)-2-(9Z-octadecenoyl)-sn-glycero-3-phospho-L-serine + ethanolamine. It catalyses the reaction 1-(1Z-octadecenyl)-2-(5Z,8Z,11Z,14Z- eicosatetraenoyl)-sn-glycero-3-phosphoethanolamine + L-serine = 1-(1Z-octadecenyl)-2-(5Z,8Z,11Z,14Z-eicosatetraenoyl)-sn-glycero-3-phospho-L-serine + ethanolamine. It participates in phospholipid metabolism; phosphatidylserine biosynthesis. Its function is as follows. Catalyzes a base-exchange reaction in which the polar head group of phosphatidylethanolamine (PE) or phosphatidylcholine (PC) is replaced by L-serine. Catalyzes the conversion of phosphatatidylethanolamine and does not act on phosphatidylcholine. Can utilize both phosphatidylethanolamine (PE) plasmalogen and diacyl PE as substrate and the latter is six times better utilized, indicating the importance of an ester linkage at the sn-1 position. Although it shows no sn-1 fatty acyl preference, exhibits significant preference towards docosahexaenoic acid (22:6n-3) compared with 18:1 or 20:4 at the sn-2 position. This chain is Phosphatidylserine synthase 2 (Ptdss2), found in Rattus norvegicus (Rat).